The primary structure comprises 311 residues: tRNA(Ile)-lysidine synthase (311 aa).

32-37 (SGGPDS) provides a ligand contact to ATP.

This sequence belongs to the tRNA(Ile)-lysidine synthase family.

The protein localises to the cytoplasm. It carries out the reaction cytidine(34) in tRNA(Ile2) + L-lysine + ATP = lysidine(34) in tRNA(Ile2) + AMP + diphosphate + H(+). In terms of biological role, ligates lysine onto the cytidine present at position 34 of the AUA codon-specific tRNA(Ile) that contains the anticodon CAU, in an ATP-dependent manner. Cytidine is converted to lysidine, thus changing the amino acid specificity of the tRNA from methionine to isoleucine. The chain is tRNA(Ile)-lysidine synthase from Cutibacterium acnes (strain DSM 16379 / KPA171202) (Propionibacterium acnes).